The following is an 81-amino-acid chain: MGITKTSVTFLFLLILAAFVSNYNVLASEIKPTGRIDDQCKQMCSATYGDGKCASDCRKAGFSSGRCLTSSPFGNKCCCTK.

An N-terminal signal peptide occupies residues 1 to 27; it reads MGITKTSVTFLFLLILAAFVSNYNVLA. Intrachain disulfides connect cysteine 40-cysteine 79, cysteine 44-cysteine 67, cysteine 53-cysteine 77, and cysteine 57-cysteine 78.

The protein belongs to the DEFL family.

The protein resides in the secreted. The sequence is that of Defensin-like protein 43 from Arabidopsis thaliana (Mouse-ear cress).